Reading from the N-terminus, the 328-residue chain is Basic leucine zipper (bZIP) transcription factor atfB (328 aa).

The disordered stretch occupies residues 1-39 (MLPEQSAFGRSAMPGSDAVNPGPSPFAPPPNSFSGDFLG). Pro residues predominate over residues 22-31 (GPSPFAPPPN). A basic motif region spans residues 163–202 (KAKREKFLERNRLAASKCRQKKKEHTQLLESRYREQSDKK). In terms of domain architecture, bZIP spans 163-226 (KAKREKFLER…LGLKNEVLKH (64 aa)). The leucine-zipper stretch occupies residues 205-219 (LVSEIARLRSEILGL). The disordered stretch occupies residues 250–313 (TTAPDLTDVP…SEASVLTENS (64 aa)). A compositionally biased stretch (polar residues) spans 262–277 (ASSSEGPMTPRPQQAL). Basic and acidic residues predominate over residues 283–305 (DPLHLEPSRADGSTDHSVRRDSE).

It belongs to the bZIP family. ATF subfamily.

It localises to the nucleus. Functionally, transcription factor that acts as a key player in the regulatory circuit that integrates secondary metabolism and cellular response to oxidative stress. Regulates the genes involved in development, as well as osmotic, oxidative, and cell wall stresses. Participates in the caspofungin paradoxical effect (CPE), where fungi grow beyond the minimum inhibitory concentration of caspofungin. Plays a role in virulence. The protein is Basic leucine zipper (bZIP) transcription factor atfB of Aspergillus fumigatus (strain ATCC MYA-4609 / CBS 101355 / FGSC A1100 / Af293) (Neosartorya fumigata).